The sequence spans 154 residues: MKVYEGKLNAEGLKFGIVVGRFNEFIVSKLLSGALDCLKRHGAEEDNIDITWVPGAFEIPMISKKMAFSRKYDAVICLGAVIRGSTPHFDYVSSEVSKGVAHVSLESDIPVIFSVLTTDNIEQAIERAGTKSGNKGYDGAMAAIEMANLIRELE.

5-amino-6-(D-ribitylamino)uracil contacts are provided by residues phenylalanine 22, 56 to 58 (AFE), and 80 to 82 (AVI). Position 85 to 86 (85 to 86 (ST)) interacts with (2S)-2-hydroxy-3-oxobutyl phosphate. Histidine 88 serves as the catalytic Proton donor. Phenylalanine 113 lines the 5-amino-6-(D-ribitylamino)uracil pocket. A (2S)-2-hydroxy-3-oxobutyl phosphate-binding site is contributed by arginine 127.

This sequence belongs to the DMRL synthase family.

It carries out the reaction (2S)-2-hydroxy-3-oxobutyl phosphate + 5-amino-6-(D-ribitylamino)uracil = 6,7-dimethyl-8-(1-D-ribityl)lumazine + phosphate + 2 H2O + H(+). The protein operates within cofactor biosynthesis; riboflavin biosynthesis; riboflavin from 2-hydroxy-3-oxobutyl phosphate and 5-amino-6-(D-ribitylamino)uracil: step 1/2. Its function is as follows. Catalyzes the formation of 6,7-dimethyl-8-ribityllumazine by condensation of 5-amino-6-(D-ribitylamino)uracil with 3,4-dihydroxy-2-butanone 4-phosphate. This is the penultimate step in the biosynthesis of riboflavin. The protein is 6,7-dimethyl-8-ribityllumazine synthase of Clostridium kluyveri (strain NBRC 12016).